The chain runs to 513 residues: ATP synthase subunit alpha (513 aa).

Residue 169 to 176 participates in ATP binding; that stretch reads GDRQTGKT.

It belongs to the ATPase alpha/beta chains family. In terms of assembly, F-type ATPases have 2 components, CF(1) - the catalytic core - and CF(0) - the membrane proton channel. CF(1) has five subunits: alpha(3), beta(3), gamma(1), delta(1), epsilon(1). CF(0) has three main subunits: a(1), b(2) and c(9-12). The alpha and beta chains form an alternating ring which encloses part of the gamma chain. CF(1) is attached to CF(0) by a central stalk formed by the gamma and epsilon chains, while a peripheral stalk is formed by the delta and b chains.

The protein localises to the cell inner membrane. The enzyme catalyses ATP + H2O + 4 H(+)(in) = ADP + phosphate + 5 H(+)(out). Its function is as follows. Produces ATP from ADP in the presence of a proton gradient across the membrane. The alpha chain is a regulatory subunit. The chain is ATP synthase subunit alpha from Yersinia pseudotuberculosis serotype O:1b (strain IP 31758).